The sequence spans 1396 residues: MDEAAGPSTSRTSNLEDVDDEGASLAEEDEEHTKALKAKEMMAPLFQRYNFTMKKNDLPINWNKPEILDKIRSNAVVVLQGATGCGKTTQVPQYLLEEAFERKEYCNIIVTQPRKIAAISIARRVAQERKCDLGTLVGYKVGLKEQHNEDTRLLYVTTGVLLQSLINSKTMATYTHVILDEVHEREVDMDFLLIVVRRLLSTNSKKTKVILMSATIDAKGFSEYFKIPKKSGYLSAPVISVERPRLHVVQEFYFDDLEKLKVDFQIDYEAPGISEQMYNIAAKLVVVCDHLKGQEFGDSLEYKPSIIIFLPGINEIEKMEGALEKLIASIQNAAQRPNLLIMKLHSTLPADDQTAVFRKPGPNQRKVILSTNIAESSITVPDIKFVIDFCLQRILVTDTLTNFSTLRTEWASKSNCIQRAGRAGRLMSGRVYRLVDRRFFENNMDVSTSPEILRCPLETVVLKAKLLEMGTPPSILALAMAPPNLDDIRNTILLLKEVGAMLRTVKGNYDQLDGDLTYLGRIMSKLPLDIRISKLIMLGYIFSVMEEAVTIGAGMNVKNIFLNQNSVKTYSQKMYWADGSGSDAIAILNAYTAWKSRQEQAGDTADMYNWARRMSLDRKSLIDMAELIHEVKDRLNRSGLKPVSGPNRVVWNAREKTVILKVILAGAFYPNYFIPMSVGGKELMERQSFTELGGRDPCNTVFFTGFDHERYIGPLYTVQIKKILSEGDYSKHQAMKVMYDRTTNRIFVTFLGTTDERDQRGSFMPGKVHADVYRAIKLRKLGARNRITEIRTMRQRDAIDYATSAGLGHWEDANGWVPRRKIVRNAHLSVLPPIFREKVVCQVTHVVHPNKFFLRPEDNRNKDIFREIHTQLNARQLHPFPADANFAMGQMVAAPVQENQETYARAVLRSYRNVRTTGSVSWTVFFIDYGHTAAMEETAFRQLDDSLGQLKDIPPRAFEATLTEIQPSAIISPQGSWTTESIHRFKELVLGKIFVAKVYSVVGVVASVELSRDEIRMNSELIRLKYAQYAEESYISKLDHDHRERKQREIMMDENLRNEVYRSAELTQNTYEDDELEDVNPPEDKLRCKVVLSGPHSPLETSASATIRSSVMKPVSIESDSVNSILLDSNPQDTHEKLLVAGGVNEQGNRLVLRQTSVMPNIPGFGAIMSLIFCPTAQLKKDKDETRVVTVLSGLGYDPSTGEALYPEHDMALTLDVVLNDDDITNINALRYTMDSILHTGEGQTDPKFGDASIQKLKLQVKQYIIKILEHERRFLDLRHAPNDYNWRCDLNLTAGSSSSKKMKGDFNIYDKKAIFPLLEPLNLLPVSASQLTFLKKHCHELHKLAHTDVQLPRHGITCQLCNNVLETLPQLRIHLYSKLHRDRESQIKYRSPQMY.

Residues 1–34 (MDEAAGPSTSRTSNLEDVDDEGASLAEEDEEHTK) form a disordered region. The segment covering 16–30 (EDVDDEGASLAEEDE) has biased composition (acidic residues). The 167-residue stretch at 68 to 234 (LDKIRSNAVV…FKIPKKSGYL (167 aa)) folds into the Helicase ATP-binding domain. 81–88 (GATGCGKT) provides a ligand contact to ATP. The short motif at 180–183 (DEVH) is the DEAH box element. A Helicase C-terminal domain is found at 292–468 (KGQEFGDSLE…TVVLKAKLLE (177 aa)). The Tudor domain occupies 885-950 (NFAMGQMVAA…RQLDDSLGQL (66 aa)).

It belongs to the DEAD box helicase family. DEAH subfamily.

The protein resides in the cytoplasm. The enzyme catalyses ATP + H2O = ADP + phosphate + H(+). Probable ATP-binding RNA helicase which plays a central role during gametogenesis by repressing transposable elements and preventing their mobilization, which is essential for the germline integrity. Acts via the piRNA metabolic process, which mediates the repression of transposable elements during meiosis by forming complexes composed of piRNAs and Piwi proteins and govern the methylation and subsequent repression of transposons. The sequence is that of Probable ATP-dependent RNA helicase spindle-E (spn-E) from Culex quinquefasciatus (Southern house mosquito).